The following is a 396-amino-acid chain: MTTGKTAPRRLSIFGSTGSIGRNTLNVVEHLGGRDNFEISVLTGNGNVELLARQAKASGARLAVTASDRHYDSLKSALSGSGIAVASGKSGLMEAADCEADWVMAAIVGTAGLAPTLAAARRGADIALANKECLVSAGDLFLKSIREGGGRLLPVDSEHNAIFQVLEENQRHAVERVVLTASGGPFRTASLKEMADVTVETARAHPNWSMGLKISIDSASMFNKALEMIEARHLFGLTPDQIEVILHPQSIIHSMVGYTDGSVLAQLGAPDMRTAIGYALSFPRRPNLPIERLDFARLARLDFEAPDEVRFPALRLARLAMTRGGVQGAVLNGAKEVALEAFIAGRLSFLAMADITERVMDDLAHLPPAAEMDDVFSADSQARQRASQLMKLDLVG.

The NADPH site is built by T17, G18, S19, I20, N47, and N130. K131 is a binding site for 1-deoxy-D-xylulose 5-phosphate. An NADPH-binding site is contributed by E132. D156 serves as a coordination point for Mn(2+). Residues S157, E158, S182, and H205 each contribute to the 1-deoxy-D-xylulose 5-phosphate site. E158 serves as a coordination point for Mn(2+). NADPH is bound at residue G211. 1-deoxy-D-xylulose 5-phosphate contacts are provided by S218, N223, K224, and E227. E227 serves as a coordination point for Mn(2+).

The protein belongs to the DXR family. Mg(2+) serves as cofactor. It depends on Mn(2+) as a cofactor.

It catalyses the reaction 2-C-methyl-D-erythritol 4-phosphate + NADP(+) = 1-deoxy-D-xylulose 5-phosphate + NADPH + H(+). The protein operates within isoprenoid biosynthesis; isopentenyl diphosphate biosynthesis via DXP pathway; isopentenyl diphosphate from 1-deoxy-D-xylulose 5-phosphate: step 1/6. Catalyzes the NADPH-dependent rearrangement and reduction of 1-deoxy-D-xylulose-5-phosphate (DXP) to 2-C-methyl-D-erythritol 4-phosphate (MEP). This chain is 1-deoxy-D-xylulose 5-phosphate reductoisomerase, found in Rhizobium etli (strain CIAT 652).